The chain runs to 68 residues: Protein SlyX homolog (68 aa).

It belongs to the SlyX family.

This Ectopseudomonas mendocina (strain ymp) (Pseudomonas mendocina) protein is Protein SlyX homolog.